The chain runs to 400 residues: 3-phenylpropionate/cinnamic acid dioxygenase ferredoxin--NAD(+) reductase component (400 aa).

5–36 lines the FAD pocket; the sequence is TIIIVGGGQAAAMAAASLRQQGFTGELHLFSD. Residue 146–174 coordinates NAD(+); that stretch reads SVVIVGAGTIGLELAASATQRRCKVTVIE.

It belongs to the bacterial ring-hydroxylating dioxygenase ferredoxin reductase family. In terms of assembly, this dioxygenase system consists of four proteins: the two subunits of the hydroxylase component (HcaE and HcaF), a ferredoxin (HcaC) and a ferredoxin reductase (HcaD). FAD is required as a cofactor.

It carries out the reaction 2 reduced [2Fe-2S]-[ferredoxin] + NAD(+) + H(+) = 2 oxidized [2Fe-2S]-[ferredoxin] + NADH. Its pathway is aromatic compound metabolism; 3-phenylpropanoate degradation. Part of the multicomponent 3-phenylpropionate dioxygenase, that converts 3-phenylpropionic acid (PP) and cinnamic acid (CI) into 3-phenylpropionate-dihydrodiol (PP-dihydrodiol) and cinnamic acid-dihydrodiol (CI-dihydrodiol), respectively. This is 3-phenylpropionate/cinnamic acid dioxygenase ferredoxin--NAD(+) reductase component from Escherichia coli O157:H7.